The primary structure comprises 332 residues: RNA polymerase II holoenzyme cyclin-like subunit (332 aa).

The Cyclin N-terminal domain maps to arginine 74–isoleucine 175.

It belongs to the cyclin family. Cyclin C subfamily. Component of the SRB8-11 complex, a regulatory module of the Mediator complex.

The protein resides in the nucleus. Its function is as follows. Component of the SRB8-11 complex. The SRB8-11 complex is a regulatory module of the Mediator complex which is itself involved in regulation of basal and activated RNA polymerase II-dependent transcription. The SRB8-11 complex may be involved in the transcriptional repression of a subset of genes regulated by Mediator. It may inhibit the association of the Mediator complex with RNA polymerase II to form the holoenzyme complex. The SRB8-11 complex phosphorylates the C-terminal domain (CTD) of the largest subunit of RNA polymerase II. This chain is RNA polymerase II holoenzyme cyclin-like subunit (SSN8), found in Eremothecium gossypii (strain ATCC 10895 / CBS 109.51 / FGSC 9923 / NRRL Y-1056) (Yeast).